The following is a 493-amino-acid chain: 6-aminohexanoate-cyclic-dimer hydrolase (493 aa).

Catalysis depends on charge relay system residues K72 and S150. The active-site Acyl-ester intermediate is the S174.

This sequence belongs to the amidase family. In terms of assembly, homodimer.

The enzyme catalyses 1,8-diazacyclotetradecane-2,9-dione + H2O = N-(6-aminohexanoyl)-6-aminohexanoate. Its pathway is xenobiotic degradation; nylon-6 oligomer degradation. Functionally, catalyzes the hydrolysis of 6-aminohexanoic acid cyclic dimer (1,8-diazacyclotetradecane-2,9-dione) to form the linear dimer 6-aminohexanoyl-6-aminohexanoic acid. This chain is 6-aminohexanoate-cyclic-dimer hydrolase (nylA), found in Pseudomonas sp. (strain NK87).